The chain runs to 338 residues: GTP 3',8-cyclase (338 aa).

One can recognise a Radical SAM core domain in the interval 8–227 (KLQRPLKDLR…DMIHQVMPLE (220 aa)). Arginine 17 contacts GTP. [4Fe-4S] cluster is bound by residues cysteine 24 and cysteine 28. Tyrosine 30 is an S-adenosyl-L-methionine binding site. Cysteine 31 serves as a coordination point for [4Fe-4S] cluster. A GTP-binding site is contributed by arginine 71. Residue glycine 75 coordinates S-adenosyl-L-methionine. Position 102 (threonine 102) interacts with GTP. Serine 126 is an S-adenosyl-L-methionine binding site. GTP is bound at residue lysine 163. Methionine 197 provides a ligand contact to S-adenosyl-L-methionine. The [4Fe-4S] cluster site is built by cysteine 261 and cysteine 264. GTP is bound at residue 266 to 268 (RAR). Cysteine 278 is a binding site for [4Fe-4S] cluster.

Belongs to the radical SAM superfamily. MoaA family. As to quaternary structure, monomer and homodimer. [4Fe-4S] cluster is required as a cofactor.

It catalyses the reaction GTP + AH2 + S-adenosyl-L-methionine = (8S)-3',8-cyclo-7,8-dihydroguanosine 5'-triphosphate + 5'-deoxyadenosine + L-methionine + A + H(+). Its pathway is cofactor biosynthesis; molybdopterin biosynthesis. In terms of biological role, catalyzes the cyclization of GTP to (8S)-3',8-cyclo-7,8-dihydroguanosine 5'-triphosphate. The chain is GTP 3',8-cyclase from Bacillus anthracis (strain CDC 684 / NRRL 3495).